We begin with the raw amino-acid sequence, 88 residues long: uncharacterized protein (88 aa).

The first 24 residues, 1–24 (MLPRSCKDFYETLRTAVLCGQACA), serve as a signal peptide directing secretion.

This sequence to Rhizobium NGR234A y4oL.

This is an uncharacterized protein from Sinorhizobium fredii (strain NBRC 101917 / NGR234).